A 312-amino-acid chain; its full sequence is MKVAVLGAAGGIGQALALLLKTQLPSGSDLSLYDIAPVTPGVAVDLSHIPTAVNIKGFSGEDATPALQGADIVLISAGVARKPGMDRSDLFNVNAGIVRNLVEQIARTCPNALIGIITNPVNTTVAIAAEVLKKAGVYDKNKLFGITTLDTIRSNTFVAELKGKQPQDIEVPVIGGHSGVTILPLLSQIPGVSFTEQEVADLTKRIQNAGTEVVEAKAGGGSATLSMGQAAARFGLSLVRALQGESNVVECSYVEGDGKYARFFAQPILLGKNGVAERKDIGKLSAFEQQALENMLDVLHKDIELGEKFVNQ.

NAD(+)-binding positions include 7 to 13 (GAAGGIG) and D34. Residues R81 and R87 each coordinate substrate. Residues N94 and 117-119 (ITN) contribute to the NAD(+) site. 2 residues coordinate substrate: N119 and R153. The active-site Proton acceptor is the H177. Residue M227 participates in NAD(+) binding.

Belongs to the LDH/MDH superfamily. MDH type 1 family. In terms of assembly, homodimer.

It carries out the reaction (S)-malate + NAD(+) = oxaloacetate + NADH + H(+). In terms of biological role, catalyzes the reversible oxidation of malate to oxaloacetate. The chain is Malate dehydrogenase from Yersinia pseudotuberculosis serotype O:1b (strain IP 31758).